Consider the following 388-residue polypeptide: Succinate--CoA ligase [ADP-forming] subunit beta (388 aa).

The ATP-grasp domain occupies 9 to 244; it reads KQLFAEYGLP…PSQDDAREAH (236 aa). Residues lysine 46, 53-55, glutamate 99, threonine 102, and glutamate 107 each bind ATP; that span reads GRG. Positions 199 and 213 each coordinate Mg(2+). Residues asparagine 264 and 321 to 323 contribute to the substrate site; that span reads GIV.

Belongs to the succinate/malate CoA ligase beta subunit family. In terms of assembly, heterotetramer of two alpha and two beta subunits. Mg(2+) serves as cofactor.

It carries out the reaction succinate + ATP + CoA = succinyl-CoA + ADP + phosphate. The enzyme catalyses GTP + succinate + CoA = succinyl-CoA + GDP + phosphate. The protein operates within carbohydrate metabolism; tricarboxylic acid cycle; succinate from succinyl-CoA (ligase route): step 1/1. Functionally, succinyl-CoA synthetase functions in the citric acid cycle (TCA), coupling the hydrolysis of succinyl-CoA to the synthesis of either ATP or GTP and thus represents the only step of substrate-level phosphorylation in the TCA. The beta subunit provides nucleotide specificity of the enzyme and binds the substrate succinate, while the binding sites for coenzyme A and phosphate are found in the alpha subunit. The sequence is that of Succinate--CoA ligase [ADP-forming] subunit beta from Pseudomonas putida (strain ATCC 700007 / DSM 6899 / JCM 31910 / BCRC 17059 / LMG 24140 / F1).